The primary structure comprises 128 residues: Probable 4-amino-4-deoxy-L-arabinose-phosphoundecaprenol flippase subunit ArnF (128 aa).

The Cytoplasmic segment spans residues 1–10 (MKGYLWGGAS). The chain crosses the membrane as a helical span at residues 11–31 (VVLVTVAQLVLKWGMMNIPLL). Over 32-47 (SLADINVQFLTMYFVQ) the chain is Periplasmic. A helical membrane pass occupies residues 48-68 (LASVMCGLMGYALSMLCWFFA). The Cytoplasmic portion of the chain corresponds to 69-77 (LRYLPLNRA). A helical transmembrane segment spans residues 78–98 (YPLLSLSYALVYLGAVLLPWF). Residues 99–101 (NEP) lie on the Periplasmic side of the membrane. A helical membrane pass occupies residues 102–122 (ATLLKTLGAGFILLGIWLINI). At 123–128 (KPIKAS) the chain is on the cytoplasmic side.

Belongs to the ArnF family. In terms of assembly, heterodimer of ArnE and ArnF.

Its subcellular location is the cell inner membrane. It participates in bacterial outer membrane biogenesis; lipopolysaccharide biosynthesis. Its function is as follows. Translocates 4-amino-4-deoxy-L-arabinose-phosphoundecaprenol (alpha-L-Ara4N-phosphoundecaprenol) from the cytoplasmic to the periplasmic side of the inner membrane. In Yersinia pseudotuberculosis serotype O:1b (strain IP 31758), this protein is Probable 4-amino-4-deoxy-L-arabinose-phosphoundecaprenol flippase subunit ArnF.